Here is a 603-residue protein sequence, read N- to C-terminus: UvrABC system protein C (603 aa).

A GIY-YIG domain is found at 13 to 92 (NGPGVYLMKD…IRKHKPRYNI (80 aa)). The region spanning 202-237 (NDLLQKIKEQMAAASERQEYELAARLRDRMFAIQAT) is the UVR domain.

Belongs to the UvrC family. As to quaternary structure, interacts with UvrB in an incision complex.

The protein resides in the cytoplasm. The UvrABC repair system catalyzes the recognition and processing of DNA lesions. UvrC both incises the 5' and 3' sides of the lesion. The N-terminal half is responsible for the 3' incision and the C-terminal half is responsible for the 5' incision. This chain is UvrABC system protein C, found in Desulfatibacillum aliphaticivorans.